The primary structure comprises 132 residues: Small ribosomal subunit protein uS8 (132 aa).

This sequence belongs to the universal ribosomal protein uS8 family. As to quaternary structure, part of the 30S ribosomal subunit. Contacts proteins S5 and S12.

In terms of biological role, one of the primary rRNA binding proteins, it binds directly to 16S rRNA central domain where it helps coordinate assembly of the platform of the 30S subunit. The polypeptide is Small ribosomal subunit protein uS8 (Nitrobacter winogradskyi (strain ATCC 25391 / DSM 10237 / CIP 104748 / NCIMB 11846 / Nb-255)).